We begin with the raw amino-acid sequence, 306 residues long: tRNA dimethylallyltransferase (306 aa).

Position 11-18 (11-18 (GPTAVGKS)) interacts with ATP. 13 to 18 (TAVGKS) contributes to the substrate binding site. The interval 35-38 (DSIQ) is interaction with substrate tRNA.

The protein belongs to the IPP transferase family. As to quaternary structure, monomer. Mg(2+) is required as a cofactor.

The catalysed reaction is adenosine(37) in tRNA + dimethylallyl diphosphate = N(6)-dimethylallyladenosine(37) in tRNA + diphosphate. In terms of biological role, catalyzes the transfer of a dimethylallyl group onto the adenine at position 37 in tRNAs that read codons beginning with uridine, leading to the formation of N6-(dimethylallyl)adenosine (i(6)A). This is tRNA dimethylallyltransferase from Borreliella burgdorferi (strain ZS7) (Borrelia burgdorferi).